The chain runs to 239 residues: 6-phosphogluconolactonase (239 aa).

The protein belongs to the glucosamine/galactosamine-6-phosphate isomerase family. 6-phosphogluconolactonase subfamily.

The enzyme catalyses 6-phospho-D-glucono-1,5-lactone + H2O = 6-phospho-D-gluconate + H(+). Its pathway is carbohydrate degradation; pentose phosphate pathway; D-ribulose 5-phosphate from D-glucose 6-phosphate (oxidative stage): step 2/3. Functionally, hydrolysis of 6-phosphogluconolactone to 6-phosphogluconate. The polypeptide is 6-phosphogluconolactonase (pgl) (Xylella fastidiosa (strain Temecula1 / ATCC 700964)).